We begin with the raw amino-acid sequence, 202 residues long: Nudix hydrolase 13, mitochondrial (202 aa).

Residues 18–167 form the Nudix hydrolase domain; sequence NFRLVSGCIP…WMQSALEEFL (150 aa). The short motif at 65–86 is the Nudix box element; that stretch reads GGWEDDETVLEAASREAMEEAG. Residues Glu80 and Glu84 each contribute to the Mg(2+) site.

It belongs to the Nudix hydrolase family. As to quaternary structure, monomer. Mg(2+) serves as cofactor. As to expression, expressed in roots, leaves, stems and inflorescences.

Its subcellular location is the mitochondrion. Its activity is regulated as follows. Inhibited by fluoride. Its function is as follows. Mediates the hydrolysis of some nucleoside diphosphate derivatives. Can use diadenosine 5',5'''-P(1)P(6) hexaphosphate (Ap(6)A), diadenosine 5',5'''-P(1)P(5) pentaphosphate (Ap(5)A) and adenosine tetraphosphate (p(4)A) as substrates, but not diadenosine 5',5'''-P(1)P(4) tetraphosphate (Ap(4)A), diadenosine 5',5'''-P(1)P(3) triphosphate (Ap(3)A), deoxyribonucleoside triphosphates, ribonucleoside triphosphates, diphosphoinositol pentakisphosphate (PP-InsP(5)) and 5-phospho-alpha-D-ribosyl diphosphate (PRPP). In Arabidopsis thaliana (Mouse-ear cress), this protein is Nudix hydrolase 13, mitochondrial (NUDT13).